The following is a 352-amino-acid chain: Cell division protein ZipA (352 aa).

Residues 1-5 (MQELR) lie on the Periplasmic side of the membrane. A helical transmembrane segment spans residues 6–26 (LVLIIVGALAISALLLHGLWT). Residues 27-352 (SRKEKPAKFG…REKAKLYSQA (326 aa)) lie on the Cytoplasmic side of the membrane. Over residues 35–54 (FGEKPLGKLDDSNRDTEGFD) the composition is skewed to basic and acidic residues. Positions 35 to 56 (FGEKPLGKLDDSNRDTEGFDHT) are disordered.

The protein belongs to the ZipA family. Interacts with FtsZ via their C-terminal domains.

The protein resides in the cell inner membrane. Functionally, essential cell division protein that stabilizes the FtsZ protofilaments by cross-linking them and that serves as a cytoplasmic membrane anchor for the Z ring. Also required for the recruitment to the septal ring of downstream cell division proteins. The polypeptide is Cell division protein ZipA (Photobacterium profundum (strain SS9)).